The following is a 156-amino-acid chain: CASP-like protein 5C1 (156 aa).

Residues 1-21 (MENRERAGAGAVGSAGSLGLR) are Cytoplasmic-facing. The helical transmembrane segment at 22–42 (VGQAVFSSASLLFMSVGVEFF) threads the bilayer. At 43–46 (SYTA) the chain is on the extracellular side. A helical membrane pass occupies residues 47–67 (FCFLVTIMGLVIPWSCTLAMI). Over 68–81 (DVYSILVGCPLRVP) the chain is Cytoplasmic. The chain crosses the membrane as a helical span at residues 82 to 102 (GVMVIVVIGDWVLAILSLAAA). The Extracellular segment spans residues 103 to 132 (SSSAAVIDLLLQFHGSHCSPRFCGRYQLSA). Residues 133 to 153 (MMAFLSWFLTAASSLFNLWFI) traverse the membrane as a helical segment. The Cytoplasmic segment spans residues 154–156 (ASR).

The protein belongs to the Casparian strip membrane proteins (CASP) family. In terms of assembly, homodimer and heterodimers.

The protein resides in the cell membrane. This Oryza sativa subsp. japonica (Rice) protein is CASP-like protein 5C1.